The chain runs to 856 residues: Structure-specific endonuclease subunit SLX4 (856 aa).

A compositionally biased stretch (polar residues) spans 1–19 (MDNAAIASQSNTPPSNGRS). 9 disordered regions span residues 1–24 (MDNA…ARFV), 38–65 (VIEP…SHKI), 88–121 (VDSP…HKMA), 139–202 (KTRK…DNEL), 296–326 (GIQT…KKPQ), 362–392 (KKMG…GNGP), 621–640 (SKSS…SQGD), 668–689 (RLAK…NEGP), and 715–742 (DSVG…QDCD). Residues 51–60 (STLLTSLSKS) are compositionally biased toward low complexity. A compositionally biased stretch (basic residues) spans 139–152 (KTRKKKAATAKRTR). Positions 296–309 (GIQTPTESRPATND) are enriched in polar residues. Positions 673–686 (SVKSQEPKSFSLSN) are enriched in polar residues.

It belongs to the SLX4 family. In terms of assembly, forms a heterodimer with SLX1. Post-translationally, phosphorylated in response to DNA damage.

It localises to the nucleus. Regulatory subunit of the SLX1-SLX4 structure-specific endonuclease that resolves DNA secondary structures generated during DNA repair and recombination. Has endonuclease activity towards branched DNA substrates, introducing single-strand cuts in duplex DNA close to junctions with ss-DNA. In Blastomyces gilchristii (strain SLH14081) (Blastomyces dermatitidis), this protein is Structure-specific endonuclease subunit SLX4.